The following is a 1058-amino-acid chain: Kinesin-like protein KIN-5D (1058 aa).

The disordered stretch occupies residues 1-43; the sequence is MDSIQQRRGGIVSLSPAQTPRSSDKSARESRSSESNSTNRNDK. Residues 22–32 are compositionally biased toward basic and acidic residues; that stretch reads SSDKSARESRS. Positions 48 to 390 constitute a Kinesin motor domain; the sequence is NVQVILRCRP…LDYAHRAKNI (343 aa). 134 to 141 contacts ATP; the sequence is GQTGTGKT. The stretch at 438 to 517 forms a coiled coil; the sequence is QEEAEKKAMA…QANATIKEKE (80 aa).

It belongs to the TRAFAC class myosin-kinesin ATPase superfamily. Kinesin family. KIN-5/BimC subfamily.

Its subcellular location is the cytoplasm. It localises to the cytoskeleton. The protein resides in the spindle. In terms of biological role, responsible for microtubule translocation. May be important for the organization of phragmoplast-specific arrays of microtubules. Plays an essential role in stabilizing the mitotic spindle. Required during mitotic cytokinesis. The sequence is that of Kinesin-like protein KIN-5D from Arabidopsis thaliana (Mouse-ear cress).